A 164-amino-acid chain; its full sequence is Siroheme decarboxylase alpha subunit (164 aa).

The protein belongs to the Ahb/Nir family. As to quaternary structure, forms a heterodimer composed of AhbA and AhbB.

It catalyses the reaction siroheme + 2 H(+) = 12,18-didecarboxysiroheme + 2 CO2. The protein operates within porphyrin-containing compound metabolism; protoheme biosynthesis. Functionally, involved in siroheme-dependent heme b biosynthesis. Catalyzes the decarboxylation of siroheme into didecarboxysiroheme. This is Siroheme decarboxylase alpha subunit from Oleidesulfovibrio alaskensis (strain ATCC BAA-1058 / DSM 17464 / G20) (Desulfovibrio alaskensis).